The primary structure comprises 192 residues: Phosphoheptose isomerase (192 aa).

The region spanning 37-192 (LADSFKAGGK…IQLIEKEMEK (156 aa)) is the SIS domain. 52 to 54 (NGG) contacts substrate. Zn(2+) is bound by residues H61 and E65. Residues E65, 93–94 (ND), 119–121 (STS), S124, and Q172 contribute to the substrate site. Residues Q172 and H180 each contribute to the Zn(2+) site.

The protein belongs to the SIS family. GmhA subfamily. As to quaternary structure, homotetramer. Requires Zn(2+) as cofactor.

It localises to the cytoplasm. It catalyses the reaction 2 D-sedoheptulose 7-phosphate = D-glycero-alpha-D-manno-heptose 7-phosphate + D-glycero-beta-D-manno-heptose 7-phosphate. It functions in the pathway carbohydrate biosynthesis; D-glycero-D-manno-heptose 7-phosphate biosynthesis; D-glycero-alpha-D-manno-heptose 7-phosphate and D-glycero-beta-D-manno-heptose 7-phosphate from sedoheptulose 7-phosphate: step 1/1. Functionally, catalyzes the isomerization of sedoheptulose 7-phosphate in D-glycero-D-manno-heptose 7-phosphate. This chain is Phosphoheptose isomerase, found in Proteus mirabilis (strain HI4320).